We begin with the raw amino-acid sequence, 100 residues long: Urease subunit gamma (100 aa).

It belongs to the urease gamma subunit family. Heterotrimer of UreA (gamma), UreB (beta) and UreC (alpha) subunits. Three heterotrimers associate to form the active enzyme.

The protein localises to the cytoplasm. It carries out the reaction urea + 2 H2O + H(+) = hydrogencarbonate + 2 NH4(+). It participates in nitrogen metabolism; urea degradation; CO(2) and NH(3) from urea (urease route): step 1/1. The chain is Urease subunit gamma from Allorhizobium ampelinum (strain ATCC BAA-846 / DSM 112012 / S4) (Agrobacterium vitis (strain S4)).